Reading from the N-terminus, the 224-residue chain is Giant hemoglobin linker AV-1 chain (224 aa).

The region spanning 62–103 is the LDL-receptor class A domain; that stretch reads HWCPSKYHRCGNSPQCMSNMAFCDGVNDCKNHFDEDENRCVV. 3 disulfide bridges follow: Cys64–Cys77, Cys71–Cys90, and Cys84–Cys101. Asn108 carries an N-linked (GlcNAc...) asparagine glycan.

As to quaternary structure, giant hemoglobin is composed of four heme-containing chains (AI to AIV), and two linker chains (AV and AVI).

In terms of biological role, acts as a linker for the assembly of heme-containing chains in the construction of giant hemoglobin. This chain is Giant hemoglobin linker AV-1 chain, found in Lamellibrachia sp. (Deep-sea giant tube worm).